A 238-amino-acid polypeptide reads, in one-letter code: Pyridoxine 5'-phosphate synthase (238 aa).

Asn6 contacts 3-amino-2-oxopropyl phosphate. 8–9 (DH) lines the 1-deoxy-D-xylulose 5-phosphate pocket. Residue Arg17 participates in 3-amino-2-oxopropyl phosphate binding. The Proton acceptor role is filled by His42. Residues Arg44 and His49 each coordinate 1-deoxy-D-xylulose 5-phosphate. Glu69 (proton acceptor) is an active-site residue. Thr99 provides a ligand contact to 1-deoxy-D-xylulose 5-phosphate. The active-site Proton donor is the His190. 3-amino-2-oxopropyl phosphate-binding positions include Gly191 and 212 to 213 (GH).

The protein belongs to the PNP synthase family. As to quaternary structure, homooctamer; tetramer of dimers.

The protein resides in the cytoplasm. The enzyme catalyses 3-amino-2-oxopropyl phosphate + 1-deoxy-D-xylulose 5-phosphate = pyridoxine 5'-phosphate + phosphate + 2 H2O + H(+). The protein operates within cofactor biosynthesis; pyridoxine 5'-phosphate biosynthesis; pyridoxine 5'-phosphate from D-erythrose 4-phosphate: step 5/5. Catalyzes the complicated ring closure reaction between the two acyclic compounds 1-deoxy-D-xylulose-5-phosphate (DXP) and 3-amino-2-oxopropyl phosphate (1-amino-acetone-3-phosphate or AAP) to form pyridoxine 5'-phosphate (PNP) and inorganic phosphate. This chain is Pyridoxine 5'-phosphate synthase, found in Chlorobium phaeobacteroides (strain BS1).